The sequence spans 353 residues: Feruloyl esterase B (353 aa).

The first 18 residues, 1-18 (MAIPLVLVLAWLLPVVLA), serve as a signal peptide directing secretion. Positions 19–291 (ASLTQVNNFG…VSVVLDWFGI (273 aa)) are catalytic. S136 acts as the Charge relay system in catalysis. N-linked (GlcNAc...) asparagine glycosylation is found at N179 and N246. The CBM1 domain maps to 317-353 (CTAAHWAQCGGIGYSGCTACASPYTCQKANDYYSQCL).

Belongs to the carbohydrate esterase 1 (CE1) family. Feruloyl esterase type B subfamily. Post-translationally, glycosylated.

It localises to the secreted. It catalyses the reaction feruloyl-polysaccharide + H2O = ferulate + polysaccharide.. Inhibited by the specific serine esterase inhibitor AEBSF. Its function is as follows. Involved in degradation of plant cell walls. Hydrolyzes the feruloyl-arabinose ester bond in arabinoxylans, and the feruloyl-galactose and feruloyl-arabinose ester bonds in pectin. Binds strongly to cellulose. The sequence is that of Feruloyl esterase B (FAEB) from Talaromyces funiculosus (Fruitlet core rot fungus).